The sequence spans 179 residues: Ribulose bisphosphate carboxylase small subunit, chloroplastic 3 (179 aa).

A chloroplast-targeting transit peptide spans 1–58 (MASSATMLSSVATAARAAPAQASMVAPFVGLKSASAFPVTQKPATGLSTLPSNGGRVQ).

The protein belongs to the RuBisCO small chain family. In terms of assembly, heterohexadecamer of 8 large and 8 small subunits.

It localises to the plastid. Its subcellular location is the chloroplast. Functionally, ruBisCO catalyzes two reactions: the carboxylation of D-ribulose 1,5-bisphosphate, the primary event in carbon dioxide fixation, as well as the oxidative fragmentation of the pentose substrate. Both reactions occur simultaneously and in competition at the same active site. Although the small subunit is not catalytic it is essential for maximal activity. The polypeptide is Ribulose bisphosphate carboxylase small subunit, chloroplastic 3 (Fritillaria agrestis (Stinkbells)).